A 506-amino-acid polypeptide reads, in one-letter code: Sporulation kinase D (506 aa).

The next 2 helical transmembrane spans lie at 17–37 and 250–270; these read VKLY…FVYE and LVLP…LVLY. Positions 298 to 505 constitute a Histidine kinase domain; it reads STAHEIRNPL…EVTITLPVSA (208 aa). A Phosphohistidine; by autocatalysis modification is found at His301.

As to quaternary structure, oligomerizes, probably forms homodimers; oligomerization is assisted by FloT. Interacts with FloT.

Its subcellular location is the cell membrane. It carries out the reaction ATP + protein L-histidine = ADP + protein N-phospho-L-histidine.. In terms of biological role, phosphorylates the sporulation-regulatory protein spo0F and, to a minor extent, is responsible for heterogeneous expression of spo0A during logarithmical growth. Also phosphorylates spo0A under biofilm growth conditions. This chain is Sporulation kinase D (kinD), found in Bacillus subtilis (strain 168).